The following is a 194-amino-acid chain: 7-methyl-GTP pyrophosphatase (194 aa).

Asp67 acts as the Proton acceptor in catalysis.

Belongs to the Maf family. YceF subfamily. The cofactor is a divalent metal cation.

Its subcellular location is the cytoplasm. It carries out the reaction N(7)-methyl-GTP + H2O = N(7)-methyl-GMP + diphosphate + H(+). Nucleoside triphosphate pyrophosphatase that hydrolyzes 7-methyl-GTP (m(7)GTP). May have a dual role in cell division arrest and in preventing the incorporation of modified nucleotides into cellular nucleic acids. In Pseudoalteromonas atlantica (strain T6c / ATCC BAA-1087), this protein is 7-methyl-GTP pyrophosphatase.